The following is a 330-amino-acid chain: Putative UV-damage endonuclease (330 aa).

It belongs to the uve1/UvsE family.

The protein resides in the virion. In terms of biological role, endonuclease for the repair of UV-irradiated DNA. The polypeptide is Putative UV-damage endonuclease (Acanthamoeba polyphaga mimivirus (APMV)).